The sequence spans 280 residues: uncharacterized protein (280 aa).

Belongs to the metallo-dependent hydrolases superfamily.

This is an uncharacterized protein from Methanocaldococcus jannaschii (strain ATCC 43067 / DSM 2661 / JAL-1 / JCM 10045 / NBRC 100440) (Methanococcus jannaschii).